The chain runs to 786 residues: MSSILLRSYRHHAKVWTRPSSKSSFIRSLASRSNPTSSFEHVRRVFDDDKYYQDFNNGTLSRKIFSGPRTGLFKNEKLTTPQGLIDFSGQCLTEAQTLVDTMIREAETSDQGKIHYIRRLDQLSDILCRVIDVAEFIRVAHPNSKWTHAAQQTHELMFEYMNQLNTNVQLHTILGNILADKSITSKLSSEEIMVGEYLKQDFERSGIYMEPHTRENFVALTQEISVLGSHFNNGIHELKDYWCEISQQEYEAIDNADLKREIRRFQQKSPRSSRNSVYIPLAGSLPYSILQRCSMESVRRKVWIALHNASEEQISTLNLFLKYRATLSKMLGYESFAHYQLEHKMAKNPENVLTFLENLQRKMVDGENSGLISELESLYAMSNHWKPGASKSDIIHAIQPWDRDYLLHKLQEEKKETQLDDNISEYLSVGTIMSGLSQLFHSIYSIELLPEPSASGETWASQVRKIKVFDNETQSTLGFLYLDFWSPNVLPSHFTIVCSRQLNKDLGEKVEVMKPLVQLDETESHQLPVISLVCNFHQGNSFIGRFAGLETSKPTLLTLDQVDTIFHEMGHAMHSMIGRTKLQNLSGTRCSTDFVELPSVLMESFSKDPRVLGRIARHYSTNELLPHDILAKHQHYRNVLENSETYMQSKMAMLDQVLHGKSIVKQLEMARDDIDSTTMYHSLEKELKVFSDQWSTWHGKFPHLFSYGAVYFSYLFDRAIAEKIWKSLFQNDPWSREAGTTYKEAILKWGGTRDPWHCLADALSNQELSKGDEKAMRIIGGETKDL.

The N-terminal 29 residues, 1–29 (MSSILLRSYRHHAKVWTRPSSKSSFIRSL), are a transit peptide targeting the mitochondrion. Histidine 567 contacts Zn(2+). The active site involves glutamate 568. Zn(2+) contacts are provided by histidine 571 and histidine 574.

It belongs to the peptidase M3 family. It depends on Zn(2+) as a cofactor.

The protein localises to the mitochondrion matrix. The enzyme catalyses Release of an N-terminal octapeptide as second stage of processing of some proteins imported into the mitochondrion.. Cleaves proteins, imported into the mitochondrion, to their mature size. While most mitochondrial precursor proteins are processed to the mature form in one step by mitochondrial processing peptidase (MPP), the sequential cleavage by MIP of an octapeptide after initial processing by MPP is a required step for a subgroup of nuclear-encoded precursor proteins destined for the matrix or the inner membrane. This chain is Mitochondrial intermediate peptidase (OCT1), found in Meyerozyma guilliermondii (strain ATCC 6260 / CBS 566 / DSM 6381 / JCM 1539 / NBRC 10279 / NRRL Y-324) (Yeast).